We begin with the raw amino-acid sequence, 193 residues long: dTTP/UTP pyrophosphatase (193 aa).

The active-site Proton acceptor is the Asp-77.

Belongs to the Maf family. YhdE subfamily. The cofactor is a divalent metal cation.

The protein localises to the cytoplasm. It catalyses the reaction dTTP + H2O = dTMP + diphosphate + H(+). The catalysed reaction is UTP + H2O = UMP + diphosphate + H(+). Nucleoside triphosphate pyrophosphatase that hydrolyzes dTTP and UTP. May have a dual role in cell division arrest and in preventing the incorporation of modified nucleotides into cellular nucleic acids. This Bacteroides thetaiotaomicron (strain ATCC 29148 / DSM 2079 / JCM 5827 / CCUG 10774 / NCTC 10582 / VPI-5482 / E50) protein is dTTP/UTP pyrophosphatase.